Consider the following 290-residue polypeptide: Polyamine aminopropyltransferase (290 aa).

Residues 5–238 form the PABS domain; sequence QLWYEKLHSS…GIMTFAWASE (234 aa). Position 33 (glutamine 33) interacts with S-methyl-5'-thioadenosine. Positions 64 and 88 each coordinate spermidine. Residues glutamate 108 and 140–141 contribute to the S-methyl-5'-thioadenosine site; that span reads DG. Aspartate 158 acts as the Proton acceptor in catalysis. A spermidine-binding site is contributed by 158-161; that stretch reads DSTD. Residue proline 165 coordinates S-methyl-5'-thioadenosine.

The protein belongs to the spermidine/spermine synthase family. In terms of assembly, homodimer or homotetramer.

It is found in the cytoplasm. It carries out the reaction S-adenosyl 3-(methylsulfanyl)propylamine + putrescine = S-methyl-5'-thioadenosine + spermidine + H(+). Its pathway is amine and polyamine biosynthesis; spermidine biosynthesis; spermidine from putrescine: step 1/1. Its function is as follows. Catalyzes the irreversible transfer of a propylamine group from the amino donor S-adenosylmethioninamine (decarboxy-AdoMet) to putrescine (1,4-diaminobutane) to yield spermidine. The polypeptide is Polyamine aminopropyltransferase (Hamiltonella defensa subsp. Acyrthosiphon pisum (strain 5AT)).